The following is a 209-amino-acid chain: Ribosomal RNA large subunit methyltransferase E (209 aa).

Residues glycine 63, tryptophan 65, aspartate 83, aspartate 99, and aspartate 124 each contribute to the S-adenosyl-L-methionine site. Lysine 164 acts as the Proton acceptor in catalysis.

Belongs to the class I-like SAM-binding methyltransferase superfamily. RNA methyltransferase RlmE family.

The protein localises to the cytoplasm. The catalysed reaction is uridine(2552) in 23S rRNA + S-adenosyl-L-methionine = 2'-O-methyluridine(2552) in 23S rRNA + S-adenosyl-L-homocysteine + H(+). In terms of biological role, specifically methylates the uridine in position 2552 of 23S rRNA at the 2'-O position of the ribose in the fully assembled 50S ribosomal subunit. The polypeptide is Ribosomal RNA large subunit methyltransferase E (Aliivibrio fischeri (strain MJ11) (Vibrio fischeri)).